Consider the following 736-residue polypeptide: Subtilisin-like protease SBT1.9 (736 aa).

The N-terminal stretch at 1–20 (MGMTVVIILVFSFFVAIVTA) is a signal peptide. Positions 21–101 (ETSPYIIHMD…FTKDLPVKLH (81 aa)) are cleaved as a propeptide — activation peptide. The region spanning 25-101 (YIIHMDLSAK…FTKDLPVKLH (77 aa)) is the Inhibitor I9 domain. The Peptidase S8 domain occupies 103–582 (TFSPKFIGLN…AGHVSTNKVL (480 aa)). Asn-112 carries an N-linked (GlcNAc...) asparagine glycan. Asp-133 acts as the Charge relay system in catalysis. The N-linked (GlcNAc...) asparagine glycan is linked to Asn-162. The active-site Charge relay system is His-205. N-linked (GlcNAc...) asparagine glycosylation is found at Asn-220, Asn-381, and Asn-453. The PA domain maps to 367 to 441 (VQFPVTYIES…VAFIGSKHRE (75 aa)). Ser-529 functions as the Charge relay system in the catalytic mechanism. Residue Asn-617 is glycosylated (N-linked (GlcNAc...) asparagine).

Belongs to the peptidase S8 family.

It is found in the secreted. The polypeptide is Subtilisin-like protease SBT1.9 (Arabidopsis thaliana (Mouse-ear cress)).